A 158-amino-acid chain; its full sequence is Transcription elongation factor GreA (158 aa).

Belongs to the GreA/GreB family.

Functionally, necessary for efficient RNA polymerase transcription elongation past template-encoded arresting sites. The arresting sites in DNA have the property of trapping a certain fraction of elongating RNA polymerases that pass through, resulting in locked ternary complexes. Cleavage of the nascent transcript by cleavage factors such as GreA or GreB allows the resumption of elongation from the new 3'terminus. GreA releases sequences of 2 to 3 nucleotides. The chain is Transcription elongation factor GreA from Salmonella typhi.